The primary structure comprises 686 residues: Cation channel sperm-associated protein 1 (686 aa).

The span at 1-15 (MDQSSRRDESYHETH) shows a compositional bias: basic and acidic residues. 4 disordered regions span residues 1–57 (MDQS…QQPY), 97–177 (TLPN…NRDH), 207–271 (DHHH…KSTA), and 289–318 (QSRESLRESASLSEGEDHVQKRKKAQRAHK). Residues 1-351 (MDQSSRRDES…QMILSLTQSL (351 aa)) lie on the Cytoplasmic side of the membrane. Residues 25–35 (SHPHPHPHPTL) are compositionally biased toward basic residues. Over residues 128–142 (DPNHHPHQDDPHRPS) the composition is skewed to basic and acidic residues. Polar residues predominate over residues 147–160 (HPSSTGSHQGTTHQ). 2 stretches are compositionally biased toward basic residues: residues 211 to 229 (EGHHAHSHHGEHPHHKEQR) and 235 to 244 (HMHHHIHHRS). Residues 245-271 (PSASQLSHKSHSTLATSPSHVGSKSTA) are compositionally biased toward polar residues. Over residues 308-318 (QKRKKAQRAHK) the composition is skewed to basic residues. Residues 352–373 (GFETFIFIVVCLNTVILVAQTF) traverse the membrane as a helical segment. Residues 374–382 (TELEIRGEW) are Extracellular-facing. Residues 383–404 (YFMVLDSIFLSIYVLEAVLKLI) traverse the membrane as a helical segment. At 405-412 (ALGLEYFY) the chain is on the cytoplasmic side. A helical transmembrane segment spans residues 413 to 435 (DPWNNLDFFIMVMAVLDFVLLQI). The Extracellular portion of the chain corresponds to 436 to 446 (NSLSYSFYNHS). The helical transmembrane segment at 447 to 469 (LFRILKVFKSMRALRAIRVLRRL) threads the bilayer. The Cytoplasmic portion of the chain corresponds to 470–487 (SILTSLHEVAGTLSGSLP). The chain crosses the membrane as a helical span at residues 488 to 510 (SITAILTLMFTCLFLFSVVLRAL). Residues 511–521 (FQDSDPKRFQN) lie on the Extracellular side of the membrane. An intramembrane region (helical; Pore-forming) is located at residues 522-534 (IFTTLFTLFTMLT). Residues 535-551 (LDDWSLIYIDNRAQGAW) lie on the Extracellular side of the membrane. The chain crosses the membrane as a helical span at residues 552–577 (YIIPILMIYIVIQYFIFLNLVIAVLV). Residues 578–686 (DNFQMALLKG…FEAGDDDYGK (109 aa)) lie on the Cytoplasmic side of the membrane.

This sequence belongs to the cation channel sperm-associated (TC 1.A.1.19) family. As to quaternary structure, component of the CatSper complex or CatSpermasome composed of the core pore-forming members CATSPER1, CATSPER2, CATSPER3 and CATSPER4 as well as auxiliary members CATSPERB, CATSPERG2, CATSPERD, CATSPERE, CATSPERZ, C2CD6/CATSPERT, SLCO6C1, TMEM249, TMEM262 and EFCAB9. HSPA1 may be an additional auxiliary complex member. The core complex members CATSPER1, CATSPER2, CATSPER3 and CATSPER4 form a heterotetrameric channel. The auxiliary CATSPERB, CATSPERG2, CATSPERD and CATSPERE subunits form a pavilion-like structure over the pore which stabilizes the complex through interactions with CATSPER4, CATSPER3, CATSPER1 and CATSPER2 respectively. SLCO6C1 interacts with CATSPERE, and TMEM262/CATSPERH interacts with CATSPERB, further stabilizing the complex. C2CD6/CATSPERT interacts at least with CATSPERD and is required for targeting the CatSper complex in the flagellar membrane. Interacts with Ca(v)3.3/CACNA1I, leading to suppression of T-type calcium channel activity. Testis-specific.

Its subcellular location is the cell projection. The protein localises to the cilium. The protein resides in the flagellum membrane. The catalysed reaction is Ca(2+)(in) = Ca(2+)(out). Activated by intracellular alkalinization. In contrast to the human ortholog, not activated by progesterone. Functionally, pore-forming subunit of the CatSper complex, a sperm-specific voltage-gated calcium channel that plays a central role in sperm cell hyperactivation. Controls calcium entry to mediate the hyperactivated motility, a step needed for sperm motility which is essential late in the preparation of sperm for fertilization. The chain is Cation channel sperm-associated protein 1 (Catsper1) from Mus musculus (Mouse).